The chain runs to 449 residues: Nuclear hormone receptor family member nhr-43 (449 aa).

Residues 44–122 (NIHCRVCERR…VGLNVDAVVG (79 aa)) constitute a DNA-binding region (nuclear receptor). 2 NR C4-type zinc fingers span residues 47–68 (CRVC…CRAC) and 84–105 (CRRG…CQKC). The segment covering 125 to 142 (SPDHVKTTSRDESVKKED) has biased composition (basic and acidic residues). The tract at residues 125-154 (SPDHVKTTSRDESVKKEDEESDTGSEGKSC) is disordered. The NR LBD domain occupies 200–449 (NYNEFTKSRL…SDLNAYLYSI (250 aa)).

The protein resides in the nucleus. Ligand-activated transcription factor. Positively modulates expression of homeobox protein lin-39, perhaps by binding to the sequence motif 5'-TGAC-3' in regulatory regions of the lin-39 gene, acting in the embryo, and also in the vulval lineage. This chain is Nuclear hormone receptor family member nhr-43, found in Caenorhabditis elegans.